The primary structure comprises 847 residues: Endo-beta-N-acetylglucosaminidase EndoSd (847 aa).

Residues 1–36 (MDKRLLVKRTLGCVCAATLMGAILATHHDSLISVKA) form the signal peptide. Residues 65–377 (PLYAGYFRTW…HPVVDNISHT (313 aa)) form the GH18 domain. His107 contributes to the a glycoprotein binding site. Glu186 (proton donor) is an active-site residue. Glu188, Gln250, Tyr252, Glu288, Glu289, Asn295, and Tyr339 together coordinate a glycoprotein. LRR repeat units lie at residues 423–446 (LERYNKTLVLTVDKIHSLKGLEKL), 447–470 (SHLQKLELCQLSNVKEVTPDILPE), 483–506 (MTGLEKLNLRGLNRQTLDGIDVNG), and 507–530 (LTHLTSFDISHNSLDLSEKSADRK). The tract at residues 683–836 (MENLAKGAKV…YTELQILGQR (154 aa)) is carbohydrate-binding module (CBM). Ca(2+)-binding residues include Lys704, Asp707, and Glu829.

This sequence belongs to the glycosyl hydrolase 18 family.

Its subcellular location is the secreted. It is found in the host extracellular space. It catalyses the reaction an N(4)-(oligosaccharide-(1-&gt;3)-[oligosaccharide-(1-&gt;6)]-beta-D-Man-(1-&gt;4)-beta-D-GlcNAc-(1-&gt;4)-alpha-D-GlcNAc)-L-asparaginyl-[protein] + H2O = an oligosaccharide-(1-&gt;3)-[oligosaccharide-(1-&gt;6)]-beta-D-Man-(1-&gt;4)-D-GlcNAc + N(4)-(N-acetyl-beta-D-glucosaminyl)-L-asparaginyl-[protein]. Functionally, endoglucosidase that acts as a host immune evasion factor by mediating hydrolysis of the N-linked glycan from the Fc region of host immunoglobulin-gamma (IgG) during infection. Specifically catalyzes the hydrolysis of the beta-1,4 linkage between the first two N-acetylglucosamine residues of the complex-type N-linked glycan located on 'Asn-297' of the Fc region of IgG antibodies (IGHG1, IGHG2, IGHG3 or IGHG4), thereby preventing interaction between IgGs and Fc receptors and ability to activate the complement pathway. Shows a specificity for biantennary complex type N-glycans; does neither cleave larger complex type glycans nor oligomannose and nor hybrid-type glycans. Specifically acts on IgGs; does not act on immunoglobulin alpha, beta, delta or mu. The polypeptide is Endo-beta-N-acetylglucosaminidase EndoSd (Streptococcus dysgalactiae).